Reading from the N-terminus, the 394-residue chain is S-adenosylmethionine synthase (394 aa).

His-18 contacts ATP. Asp-20 is a binding site for Mg(2+). K(+) is bound at residue Glu-46. The L-methionine site is built by Glu-59 and Gln-102. The interval 102-112 is flexible loop; sequence QSPDIDMGVSA. Residues 175–177, Asp-250, 256–257, Ala-273, and Lys-277 contribute to the ATP site; these read DGK and RK. Residue Asp-250 coordinates L-methionine. L-methionine is bound at residue Lys-281.

This sequence belongs to the AdoMet synthase family. Homotetramer; dimer of dimers. It depends on Mg(2+) as a cofactor. The cofactor is K(+).

The protein resides in the cytoplasm. It carries out the reaction L-methionine + ATP + H2O = S-adenosyl-L-methionine + phosphate + diphosphate. Its pathway is amino-acid biosynthesis; S-adenosyl-L-methionine biosynthesis; S-adenosyl-L-methionine from L-methionine: step 1/1. In terms of biological role, catalyzes the formation of S-adenosylmethionine (AdoMet) from methionine and ATP. The overall synthetic reaction is composed of two sequential steps, AdoMet formation and the subsequent tripolyphosphate hydrolysis which occurs prior to release of AdoMet from the enzyme. The sequence is that of S-adenosylmethionine synthase from Brachyspira hyodysenteriae (strain ATCC 49526 / WA1).